The chain runs to 1083 residues: Centrosomal protein of 131 kDa (1083 aa).

Disordered stretches follow at residues 1–155 (MKGT…AGPR) and 220–258 (GSESSGFGKLPKNVSSATHSARNNTGGSTGLPRRKEVTE). Residues 1-250 (MKGTRAIGSV…RNNTGGSTGL (250 aa)) are interaction with PLK4. Phosphoserine occurs at positions 14 and 35. Phosphoserine; by MAPKAPK2 is present on Ser47. Positions 68–87 (QAINNLRRSNSTTQVSQPRS) are enriched in polar residues. A Phosphoserine; by MAPKAPK2 and PLK4 modification is found at Ser78. A phosphoserine mark is found at Ser89, Ser105, Ser114, Ser146, and Ser150. Polar residues predominate over residues 138–148 (LPSNARSSSAL). A compositionally biased stretch (polar residues) spans 232 to 245 (NVSSATHSARNNTG). The region spanning 269–289 (NQATVTIQRWYRHQVQRRGAG) is the IQ domain. The interval 301–429 (REEQRQRSGE…PQQPPEDRTQ (129 aa)) is disordered. 2 stretches are compositionally biased toward basic and acidic residues: residues 317 to 333 (HQQKEAARRKAREEKAR) and 360 to 369 (GPPENPRETR). Ser381 carries the phosphoserine modification. Residue Thr383 is modified to Phosphothreonine. Residues Ser453, Ser489, Asp496, Ser499, Ser731, and Ser798 each carry the phosphoserine modification. Over residues 1047-1076 (KEEAVSSLRTQHEAAVKRADHLEELLEQHR) the composition is skewed to basic and acidic residues. Residues 1047-1083 (KEEAVSSLRTQHEAAVKRADHLEELLEQHRRPTPSTK) form a disordered region.

This sequence belongs to the CEP131 family. Self-associates. Associates with the centriolar satellite BBSome protein complex. Interacts with BBS4; the interaction limits BBS4 availability for association with the BBSome complex, and hence negatively regulates ciliary localization of the BBSome complex. Interacts with MIB1. Interacts with PCM1; the interaction increases in response to ultraviolet light (UV) radiation. Associates with microtubules; association with microtubules is reduced in response to cellular stress, such as UV stimulation, in a process that requires p38 MAP kinase signaling. Interacts with CEP290, DCTN1, PCNT, PCM1 and CEP152. Interacts with 14-3-3 proteins following UV-induced phosphorylation by MAPKAPK2; this inhibits formation of novel centriolar satellites. Interacts with SDCCAG8. Interacts with CCDC61. Interacts with PLK4. In terms of processing, ubiquitinated. Undergoes monoubiquitination catalyzed by the E3 ubiquitin-protein ligase MIB1 in proliferating cells, preventing cilia formation. Monoubiquitination by MIB1 is inhibited in response to cellular stress, such as ultraviolet light (UV) radiation or heat shock, resulting in cilia formation initiation. Post-translationally, MAPKAPK2-dependent phosphorylation at Ser-47 and Ser-78 occurs in response to cellular stress such as exposure to ultraviolet irradiation and promotes binding to 14-3-3 proteins which leads to cytoplasmic sequestration of CEP131 and blocks formation of new centriolar satellites. Phosphorylation at Ser-78 mediated by PLK4 is essential for proper organization and integrity of centriolar satellites but is dispensable for its localization to centrioles and its function in ciliogenesis.

Its subcellular location is the cytoplasm. It is found in the cytoskeleton. The protein localises to the microtubule organizing center. It localises to the centrosome. The protein resides in the centriolar satellite. Its subcellular location is the centriole. It is found in the cilium basal body. The protein localises to the cytoplasmic vesicle. It localises to the secretory vesicle. The protein resides in the acrosome. Component of centriolar satellites contributing to the building of a complex and dynamic network required to regulate cilia/flagellum formation. In proliferating cells, MIB1-mediated ubiquitination induces its sequestration within centriolar satellites, precluding untimely cilia formation initiation. In contrast, during normal and ultraviolet or heat shock cellular stress-induced ciliogenesis, its non-ubiquitinated form is rapidly displaced from centriolar satellites and recruited to centrosome/basal bodies in a microtubule- and p38 MAPK-dependent manner. Also acts as a negative regulator of BBSome ciliary trafficking. Plays a role in sperm flagellar formation; may be involved in the regulation of intraflagellar transport (IFT) and/or intramanchette (IMT) trafficking, which are important for axoneme extension and/or cargo delivery to the nascent sperm tail. Required for optimal cell proliferation and cell cycle progression; may play a role in the regulation of genome stability in non-ciliogenic cells. Involved in centriole duplication. Required for CEP152, WDR62 and CEP63 centrosomal localization and promotes the centrosomal localization of CDK2. Essential for maintaining proper centriolar satellite integrity. The sequence is that of Centrosomal protein of 131 kDa (CEP131) from Homo sapiens (Human).